Reading from the N-terminus, the 202-residue chain is MSRYRGAVVRIIRRLGELPGLTRKTTRRNSRPGQHGDQPRKPSEYAIRLEEKQKLRFNYGLTEKQLLRYVKDAKRIKGSTGEALLQLLEMRLDNIVFRLGMAPTIPAARQLVNHGHICVNAKRVSIPSYQCQTTDVISVRNNARSKQLVENYLSFPGLANIPSHLEIDKEKLVGKVNGIIERDWVALQLNELLIVEYYSRKG.

A disordered region spans residues 20–43; that stretch reads GLTRKTTRRNSRPGQHGDQPRKPS. In terms of domain architecture, S4 RNA-binding spans 90–152; the sequence is MRLDNIVFRL…ARSKQLVENY (63 aa).

It belongs to the universal ribosomal protein uS4 family. In terms of assembly, part of the 30S ribosomal subunit. Contacts protein S5. The interaction surface between S4 and S5 is involved in control of translational fidelity.

It is found in the plastid. The protein resides in the chloroplast. In terms of biological role, one of the primary rRNA binding proteins, it binds directly to 16S rRNA where it nucleates assembly of the body of the 30S subunit. Functionally, with S5 and S12 plays an important role in translational accuracy. In Rhodomonas salina (Cryptomonas salina), this protein is Small ribosomal subunit protein uS4c (rps4).